Reading from the N-terminus, the 211-residue chain is Mitotic spindle assembly checkpoint protein MAD2B (211 aa).

Residues Q13–V203 form the HORMA domain. Residues E21–A155 are mediates interaction with REV1 and REV3L and homodimerization.

As to quaternary structure, homooligomer. Heterodimer with REV3L. This dimer forms the minimal DNA polymerase zeta complex (Pol-zeta2), with REV3L bearing DNA polymerase catalytic activity, although its activity is very low in this context. Component of the tetrameric Pol-zeta complex (Pol-zeta4), which consists of REV3L, MAD2L2, POLD2 and POLD3; Pol-zeta4 is the fully active form of DNA polymerase zeta. Component of the shieldin complex, consisting of SHLD1, SHLD2, SHLD3 and MAD2L2/REV7. Within the complex, SHLD2 forms a scaffold which interacts with a SHLD3-MAD2L2 subcomplex via its N-terminus, and with SHLD1 via its C-terminus. Interacts with REV1. Interacts with ADAM9. Interacts with CHAMP1. Interacts with FZR1 (in complex with the anaphase promoting complex APC). May interact with CDC20. Interacts with RAN. Interacts with ELK1; the interaction is direct and recruits MAD2L2 to ELK1-specific promoters. May interact with the JNK kinases MAPK8 and/or MAPK9 to stimulate ELK1 phosphorylation and transcriptional activity upon DNA damage. Interacts with TCF7L2; prevents its binding to promoters and negatively modulates its transcriptional activity. Interacts with YY1AP1. Interacts with PRCC; the interaction is direct. Interacts with POGZ. Interacts with ASTE1.

It is found in the nucleus. Its subcellular location is the cytoplasm. The protein resides in the cytoskeleton. The protein localises to the spindle. Its function is as follows. Adapter protein able to interact with different proteins and involved in different biological processes. Mediates the interaction between the error-prone DNA polymerase zeta catalytic subunit REV3L and the inserter polymerase REV1, thereby mediating the second polymerase switching in translesion DNA synthesis. Translesion DNA synthesis releases the replication blockade of replicative polymerases, stalled in presence of DNA lesions. Component of the shieldin complex, which plays an important role in repair of DNA double-stranded breaks (DSBs). During G1 and S phase of the cell cycle, the complex functions downstream of TP53BP1 to promote non-homologous end joining (NHEJ) and suppress DNA end resection. Mediates various NHEJ-dependent processes including immunoglobulin class-switch recombination, and fusion of unprotected telomeres. May also regulate another aspect of cellular response to DNA damage through regulation of the JNK-mediated phosphorylation and activation of the transcriptional activator ELK1. Inhibits the FZR1- and probably CDC20-mediated activation of the anaphase promoting complex APC thereby regulating progression through the cell cycle. Regulates TCF7L2-mediated gene transcription and may play a role in epithelial-mesenchymal transdifferentiation. This chain is Mitotic spindle assembly checkpoint protein MAD2B (Mad2l2), found in Rattus norvegicus (Rat).